We begin with the raw amino-acid sequence, 288 residues long: MDVTAKYELIGLMAYPIRHSLSPEMQNKALEKAGLSFTYMAFEVDNDSFPGAIEGLKALKMRGTGVSMPNKQLACEYVDELTPAAKLVGAINTIVNDDGYLRGYNTDGTGHIRAIKESGFDIKGKTMVLLGAGGASTAIGAQGAIEGLKEIKLFNRRDEFFDKALAFAQRVNENTDCVVTVTDLADQQAFAEALASADILTNGTKVGMKPLENESLVNDISLLHPGLLVTECVYNPHMTKLLQQAQQAGCKTIDGYGMLLWQGAEQFTLWTGKDFPLEYVKQVMGFGA.

Substrate-binding residues include K71 and D107. NAD(+)-binding positions include 132-135 (AGGA), 155-158 (NRRD), K205, 232-235 (CVYN), and G255.

Belongs to the shikimate dehydrogenase family. Homodimer.

The enzyme catalyses L-quinate + NAD(+) = 3-dehydroquinate + NADH + H(+). It catalyses the reaction L-quinate + NADP(+) = 3-dehydroquinate + NADPH + H(+). It carries out the reaction shikimate + NADP(+) = 3-dehydroshikimate + NADPH + H(+). The catalysed reaction is shikimate + NAD(+) = 3-dehydroshikimate + NADH + H(+). Its pathway is metabolic intermediate biosynthesis; chorismate biosynthesis; chorismate from D-erythrose 4-phosphate and phosphoenolpyruvate: step 4/7. The actual biological function of YdiB remains unclear, nor is it known whether 3-dehydroshikimate or quinate represents the natural substrate. Catalyzes the reversible NAD-dependent reduction of both 3-dehydroshikimate (DHSA) and 3-dehydroquinate to yield shikimate (SA) and quinate, respectively. It can use both NAD or NADP for catalysis, however it has higher catalytic efficiency with NAD. The polypeptide is Quinate/shikimate dehydrogenase (Escherichia coli O17:K52:H18 (strain UMN026 / ExPEC)).